The sequence spans 451 residues: Phosphoglucosamine mutase (451 aa).

The Phosphoserine intermediate role is filled by Ser-107. Positions 107, 246, 248, and 250 each coordinate Mg(2+). The residue at position 107 (Ser-107) is a Phosphoserine.

Belongs to the phosphohexose mutase family. The cofactor is Mg(2+). Post-translationally, activated by phosphorylation.

The enzyme catalyses alpha-D-glucosamine 1-phosphate = D-glucosamine 6-phosphate. Functionally, catalyzes the conversion of glucosamine-6-phosphate to glucosamine-1-phosphate. The chain is Phosphoglucosamine mutase from Burkholderia cenocepacia (strain HI2424).